Reading from the N-terminus, the 130-residue chain is Succinate dehydrogenase assembly factor 3, mitochondrial (130 aa).

Residues 1–8 constitute a mitochondrion transit peptide; that stretch reads MRPSLLRL.

The protein belongs to the complex I LYR family. SDHAF3 subfamily. As to quaternary structure, interacts with the iron-sulfur protein subunit within the SDH catalytic dimer.

It localises to the mitochondrion matrix. Its function is as follows. Plays an essential role in the assembly of succinate dehydrogenase (SDH), an enzyme complex (also referred to as respiratory complex II) that is a component of both the tricarboxylic acid (TCA) cycle and the mitochondrial electron transport chain, and which couples the oxidation of succinate to fumarate with the reduction of ubiquinone (coenzyme Q) to ubiquinol. Promotes maturation of the iron-sulfur protein subunit of the SDH catalytic dimer, protecting it from the deleterious effects of oxidants. May act together with SDHAF1. The polypeptide is Succinate dehydrogenase assembly factor 3, mitochondrial (Gibberella zeae (strain ATCC MYA-4620 / CBS 123657 / FGSC 9075 / NRRL 31084 / PH-1) (Wheat head blight fungus)).